Here is a 453-residue protein sequence, read N- to C-terminus: Fibrinogen gamma chain (453 aa).

The first 26 residues, 1–26 (MSWSLHPRNLILYFYALLFLSSTCVA), serve as a signal peptide directing secretion. Residue S68 is modified to Phosphoserine; by FAM20C. N78 is a glycosylation site (N-linked (GlcNAc...) (complex) asparagine). One can recognise a Fibrinogen C-terminal domain in the interval 170-416 (QIHDITGKDC…KTTMKIIPFN (247 aa)). A disulfide bond links C179 and C208. An N-linked (GlcNAc...) asparagine; in variant Asahi glycan is attached at N334. 4 residues coordinate Ca(2+): D344, D346, F348, and G350. An intrachain disulfide couples C352 to C365. The tract at residues 400–422 (TRWYSMKKTTMKIIPFNRLTIGE) is gamma-chain polymerization, binding amino end of another fibrin alpha chain. The platelet aggregation and Staphylococcus clumping stretch occupies residues 423–437 (GQQHHLGGAKQVRPE). Q424 is covalently cross-linked (Isoglutamyl lysine isopeptide (Gln-Lys) (interchain with K-432)). The disordered stretch occupies residues 424-453 (QQHHLGGAKQVRPEHPAETEYDSLYPEDDL). K432 is covalently cross-linked (Isoglutamyl lysine isopeptide (Lys-Gln) (interchain with Q-424)). The span at 442 to 453 (TEYDSLYPEDDL) shows a compositional bias: acidic residues. 2 positions are modified to sulfotyrosine: Y444 and Y448.

Heterohexamer; disulfide linked. Contains 2 sets of 3 non-identical chains (alpha, beta and gamma). The 2 heterotrimers are in head to head conformation with the N-termini in a small central domain. Conversion of fibrinogen to fibrin is triggered by thrombin, which cleaves fibrinopeptides A and B from alpha and beta chains, and thus exposes the N-terminal polymerization sites responsible for the formation of the soft clot. The soft clot is converted into the hard clot by factor XIIIA which catalyzes the epsilon-(gamma-glutamyl)lysine cross-linking between gamma chains (stronger) and between alpha chains (weaker) of different monomers. In terms of processing, sulfation of C-terminal tyrosines increases affinity for thrombin. In terms of tissue distribution, detected in blood plasma (at protein level).

The protein localises to the secreted. Functionally, together with fibrinogen alpha (FGA) and fibrinogen beta (FGB), polymerizes to form an insoluble fibrin matrix. Has a major function in hemostasis as one of the primary components of blood clots. In addition, functions during the early stages of wound repair to stabilize the lesion and guide cell migration during re-epithelialization. Was originally thought to be essential for platelet aggregation, based on in vitro studies using anticoagulated blood. However, subsequent studies have shown that it is not absolutely required for thrombus formation in vivo. Enhances expression of SELP in activated platelets via an ITGB3-dependent pathway. Maternal fibrinogen is essential for successful pregnancy. Fibrin deposition is also associated with infection, where it protects against IFNG-mediated hemorrhage. May also facilitate the antibacterial immune response via both innate and T-cell mediated pathways. The chain is Fibrinogen gamma chain (FGG) from Homo sapiens (Human).